The sequence spans 133 residues: QDARQIERMIEGRHGLMTLMAYELGKLGGMAKEETPYDAEVAGDAASNLSALASVLSPELFPKGSAVGEAEDSEALPAIWEKPDDFAQKISDMEEAAAKMQAAAGTDLASLQGAMRDLGAGCGSCHETYRQKD.

The residue at position 1 (glutamine 1) is a Pyrrolidone carboxylic acid. Residues methionine 17, cysteine 122, cysteine 125, and histidine 126 each contribute to the heme c site.

In terms of processing, binds 1 heme c group covalently per subunit.

The protein resides in the periplasm. Functionally, monoheme c-type cytochrome, that is particularly expressed when cells generate energy via aerobic respiration. The protein is Cytochrome c-554 (cycF) of Cereibacter sphaeroides (Rhodobacter sphaeroides).